Reading from the N-terminus, the 180-residue chain is MKKERLEQASAFGKDRVKKKKNTDTSSNLIPVPKGATKEKKRVGRGPGSKVGKTAGRGSKGQYARNTVRRGFEGGQMPIHRRLPKRGFTSKFHKEFYPVNLRDIEKSGLTGNIDAKIMVQSKILDKETTLFKILGTGEIKKAIHVIADGFSQSAKEKIEKAGGSIKLRAELKLATSETKK.

Positions M1–Q62 are disordered.

Belongs to the universal ribosomal protein uL15 family. In terms of assembly, part of the 50S ribosomal subunit.

Its function is as follows. Binds to the 23S rRNA. The sequence is that of Large ribosomal subunit protein uL15 from Leptospira interrogans serogroup Icterohaemorrhagiae serovar copenhageni (strain Fiocruz L1-130).